Consider the following 251-residue polypeptide: uncharacterized protein (251 aa).

A divalent metal cation contacts are provided by His5, His7, Glu101, His132, His163, and Asp209.

This sequence belongs to the metallo-dependent hydrolases superfamily. TatD-type hydrolase family. Requires a divalent metal cation as cofactor.

This is an uncharacterized protein from Methanocaldococcus jannaschii (strain ATCC 43067 / DSM 2661 / JAL-1 / JCM 10045 / NBRC 100440) (Methanococcus jannaschii).